A 286-amino-acid polypeptide reads, in one-letter code: KH domain-containing protein At2g38610 (286 aa).

Serine 2 is modified (N-acetylserine). The KH domain maps to 141 to 208 (EIPVDNYPNF…EHLNEQLHIL (68 aa)). The interval 256–286 (SNNLREESPGPSGGGSVSPFNSSGKRPKTGC) is disordered. A phosphoserine mark is found at serine 263 and serine 273.

The protein resides in the nucleus. This is KH domain-containing protein At2g38610 from Arabidopsis thaliana (Mouse-ear cress).